Here is a 157-residue protein sequence, read N- to C-terminus: Protein Smg (157 aa).

This sequence belongs to the Smg family.

The polypeptide is Protein Smg (Escherichia coli O8 (strain IAI1)).